Here is a 284-residue protein sequence, read N- to C-terminus: 2-dehydro-3-deoxyphosphooctonate aldolase (284 aa).

Belongs to the KdsA family.

The protein localises to the cytoplasm. The enzyme catalyses D-arabinose 5-phosphate + phosphoenolpyruvate + H2O = 3-deoxy-alpha-D-manno-2-octulosonate-8-phosphate + phosphate. It functions in the pathway carbohydrate biosynthesis; 3-deoxy-D-manno-octulosonate biosynthesis; 3-deoxy-D-manno-octulosonate from D-ribulose 5-phosphate: step 2/3. Its pathway is bacterial outer membrane biogenesis; lipopolysaccharide biosynthesis. The protein is 2-dehydro-3-deoxyphosphooctonate aldolase of Escherichia coli O6:H1 (strain CFT073 / ATCC 700928 / UPEC).